A 269-amino-acid polypeptide reads, in one-letter code: Ribosomal RNA large subunit methyltransferase E (269 aa).

S-adenosyl-L-methionine-binding residues include glycine 48, tryptophan 50, aspartate 68, aspartate 86, and aspartate 111. Residue lysine 151 is the Proton acceptor of the active site. In terms of domain architecture, TRAM spans 198–256 (PVAAGDRIEVTVEERGDEGDGIAYVEGYSIFVSDADVGETVTVEVVDAKPRFGFATRVD).

Belongs to the class I-like SAM-binding methyltransferase superfamily. RNA methyltransferase RlmE family.

The protein resides in the cytoplasm. It catalyses the reaction uridine(2552) in 23S rRNA + S-adenosyl-L-methionine = 2'-O-methyluridine(2552) in 23S rRNA + S-adenosyl-L-homocysteine + H(+). Its function is as follows. Specifically methylates the uridine in position 2552 of 23S rRNA at the 2'-O position of the ribose in the fully assembled 50S ribosomal subunit. This chain is Ribosomal RNA large subunit methyltransferase E, found in Halorubrum lacusprofundi (strain ATCC 49239 / DSM 5036 / JCM 8891 / ACAM 34).